We begin with the raw amino-acid sequence, 49 residues long: MRVKINLKCSSCDSINYLTSKNSKTHPDKIEVLKYCPKERKVTLHLESK.

This sequence belongs to the bacterial ribosomal protein bL33 family.

This Streptococcus pneumoniae (strain Hungary19A-6) protein is Large ribosomal subunit protein bL33A.